The sequence spans 510 residues: Inositol-3-phosphate synthase (510 aa).

NAD(+) contacts are provided by Gly70, Gly71, Asn72, Asn73, Asp143, Ile180, Gln190, Arg193, Thr230, Ala231, Asn232, Thr233, Gly281, Ser282, Asp306, Ser309, Asn340, Asn341, Asp342, Lys355, Ala393, Asp394, Asp422, and Ser423.

Belongs to the myo-inositol 1-phosphate synthase family. Requires NAD(+) as cofactor.

The protein resides in the cytoplasm. It is found in the cytosol. Its subcellular location is the nucleus. The catalysed reaction is D-glucose 6-phosphate = 1D-myo-inositol 3-phosphate. It participates in polyol metabolism; myo-inositol biosynthesis; myo-inositol from D-glucose 6-phosphate: step 1/2. Its function is as follows. Key enzyme in myo-inositol biosynthesis pathway that catalyzes the conversion of glucose 6-phosphate to 1-myo-inositol 1-phosphate in a NAD-dependent manner. In Brassica napus (Rape), this protein is Inositol-3-phosphate synthase.